The sequence spans 427 residues: Adenylosuccinate synthetase (427 aa).

GTP is bound by residues 12-18 and 40-42; these read GDEGKGK and GHT. The active-site Proton acceptor is the aspartate 13. Residues aspartate 13 and glycine 40 each contribute to the Mg(2+) site. IMP contacts are provided by residues 13–16, 38–41, threonine 128, arginine 142, glutamine 223, threonine 238, and arginine 302; these read DEGK and NAGH. The active-site Proton donor is histidine 41. 298-304 is a substrate binding site; the sequence is VTTGRDR. Residues arginine 304, 330-332, and 412-414 contribute to the GTP site; these read KLD and GVG.

Belongs to the adenylosuccinate synthetase family. As to quaternary structure, homodimer. It depends on Mg(2+) as a cofactor.

The protein localises to the cytoplasm. The catalysed reaction is IMP + L-aspartate + GTP = N(6)-(1,2-dicarboxyethyl)-AMP + GDP + phosphate + 2 H(+). The protein operates within purine metabolism; AMP biosynthesis via de novo pathway; AMP from IMP: step 1/2. Its function is as follows. Plays an important role in the de novo pathway of purine nucleotide biosynthesis. Catalyzes the first committed step in the biosynthesis of AMP from IMP. In Streptomyces coelicolor (strain ATCC BAA-471 / A3(2) / M145), this protein is Adenylosuccinate synthetase.